Here is a 551-residue protein sequence, read N- to C-terminus: MTYSTVSINTPPPYLTLACNEKLPTVLSIAGTDPSGGAGIEADVKTITAHRCYAMTCITALNAQTPVKVYSINNTPKEVVFQTLESNLKDMKCNVIKTGMLTAAAIEVLHEKLLQLGENRPKLVVDPVLVATSGSSLAGKDIVSLITEKVAPFADILTPNIPECYKLLGEERKVNGLQDIFQIAKDLAKITKCSNILVKGGHIPWNDEKEKYITDVLFLGAEQKFIIFKGNFVNTTHTHGTGCTLASAIASNLARGYSLPQSVYGGIEYVQNAVAIGCDVTKETVKDNGPINHVYAVEIPLEKMLSDECFTASDVIPKKPLKSAADKIPGGNFYEYLINHPKVKPHWDSYINHEFVKKVADGTLERKKFQFFIEQDYAYLVDYARVHCIAGSKAPCLEDMEKELVIVGGVRTEMGQHEKRLKEVFGVKDPDYFQKIKRGPALRAYSRYFNDVSRRGNWQELVASLTPCLMGYGEALTKMKGKVTAPEGSVYHEWCETYASSWYREAMDEGEKLLNHILETYPPEQLDTLVTIYAEVCELETNFWTAALEYE.

Q64 provides a ligand contact to 4-amino-5-hydroxymethyl-2-methylpyrimidine. C468 serves as the catalytic Nucleophile. The Proton donor role is filled by E540.

The protein in the N-terminal section; belongs to the ThiD family. It in the C-terminal section; belongs to the thiaminase-2 family.

It catalyses the reaction 4-amino-5-hydroxymethyl-2-methylpyrimidine + ATP = 4-amino-2-methyl-5-(phosphooxymethyl)pyrimidine + ADP + H(+). The enzyme catalyses 4-amino-2-methyl-5-(phosphooxymethyl)pyrimidine + ATP = 4-amino-2-methyl-5-(diphosphooxymethyl)pyrimidine + ADP. It carries out the reaction thiamine + H2O = 5-(2-hydroxyethyl)-4-methylthiazole + 4-amino-5-hydroxymethyl-2-methylpyrimidine + H(+). It functions in the pathway cofactor biosynthesis; thiamine diphosphate biosynthesis; 4-amino-2-methyl-5-diphosphomethylpyrimidine from 5-amino-1-(5-phospho-D-ribosyl)imidazole: step 2/3. Its pathway is cofactor biosynthesis; thiamine diphosphate biosynthesis; 4-amino-2-methyl-5-diphosphomethylpyrimidine from 5-amino-1-(5-phospho-D-ribosyl)imidazole: step 3/3. Functionally, trifunctional protein with both thiamine biosynthetic and degradative activity. Within the thiamine biosynthesis pathway, catalyzes the phosphorylation of hydroxymethylpyrimidine (HMP) to hydroxymethylpyrimidine phosphate (HMP-P), as well as of HMP-P to HMP-PP. Also has thiaminase II activity and degrades thiamine using water as the nucleophile, resulting only in the formation of HMP (4-amino-2-methyl-5-hydroxymethylpyrimidine) and Thz (4-methyl-5-thiazole ethanol). The sequence is that of Hydroxymethylpyrimidine/phosphomethylpyrimidine kinase THI20 from Saccharomyces cerevisiae (strain ATCC 204508 / S288c) (Baker's yeast).